The following is a 343-amino-acid chain: tRNA-specific 2-thiouridylase MnmA (343 aa).

ATP-binding positions include 7–14 and Met-33; that span reads ALSGGVDS. Cys-87 serves as the catalytic Nucleophile. A disulfide bridge connects residues Cys-87 and Cys-184. Gly-111 is an ATP binding site. Residues 135–137 are interaction with tRNA; that stretch reads KDQ. Cys-184 serves as the catalytic Cysteine persulfide intermediate. The interaction with tRNA stretch occupies residues 289–290; sequence RY.

This sequence belongs to the MnmA/TRMU family.

It localises to the cytoplasm. The catalysed reaction is S-sulfanyl-L-cysteinyl-[protein] + uridine(34) in tRNA + AH2 + ATP = 2-thiouridine(34) in tRNA + L-cysteinyl-[protein] + A + AMP + diphosphate + H(+). In terms of biological role, catalyzes the 2-thiolation of uridine at the wobble position (U34) of tRNA, leading to the formation of s(2)U34. The sequence is that of tRNA-specific 2-thiouridylase MnmA from Desulforudis audaxviator (strain MP104C).